The chain runs to 327 residues: Gibberellin 2-beta-dioxygenase 1 (327 aa).

The Fe2OG dioxygenase domain maps to 171–276 (QSDCLFRVNH…RLSMIYFCGP (106 aa)). Residues histidine 200, aspartate 202, and histidine 257 each coordinate Fe cation. The active site involves arginine 267.

The protein belongs to the iron/ascorbate-dependent oxidoreductase family. GA2OX subfamily. Requires Fe cation as cofactor. In terms of tissue distribution, predominantly expressed in roots, flowers, young fruits and seeds.

It carries out the reaction gibberellin A1 + 2-oxoglutarate + O2 = gibberellin A8 + succinate + CO2. The protein operates within plant hormone biosynthesis; gibberellin biosynthesis. Functionally, catalyzes the 2-beta-hydroxylation of several biologically active gibberellins, leading to the homeostatic regulation of their endogenous level. Catabolism of gibberellins (GAs) plays a central role in plant development. Converts GA9/GA20 to GA51/GA29 and GA4/GA1 to GA34/GA8. The protein is Gibberellin 2-beta-dioxygenase 1 (GA2OX1) of Pisum sativum (Garden pea).